The sequence spans 165 residues: Phosphopantetheine adenylyltransferase (165 aa).

Serine 10 serves as a coordination point for substrate. ATP contacts are provided by residues 10–11 (SF) and histidine 18. Residues lysine 42, threonine 79, and arginine 93 each coordinate substrate. ATP-binding positions include 94 to 96 (GLR), glutamate 104, and 129 to 135 (VRPITAT).

Belongs to the bacterial CoaD family. As to quaternary structure, homohexamer. The cofactor is Mg(2+).

The protein resides in the cytoplasm. It carries out the reaction (R)-4'-phosphopantetheine + ATP + H(+) = 3'-dephospho-CoA + diphosphate. It functions in the pathway cofactor biosynthesis; coenzyme A biosynthesis; CoA from (R)-pantothenate: step 4/5. Its function is as follows. Reversibly transfers an adenylyl group from ATP to 4'-phosphopantetheine, yielding dephospho-CoA (dPCoA) and pyrophosphate. The polypeptide is Phosphopantetheine adenylyltransferase (Afipia carboxidovorans (strain ATCC 49405 / DSM 1227 / KCTC 32145 / OM5) (Oligotropha carboxidovorans)).